The primary structure comprises 747 residues: DNA-directed RNA polymerase subunit beta' (747 aa).

4 residues coordinate Zn(2+): cysteine 70, cysteine 72, cysteine 97, and cysteine 100. Residues aspartate 502, aspartate 504, and aspartate 506 each coordinate Mg(2+).

The protein belongs to the RNA polymerase beta' chain family. RpoC1 subfamily. As to quaternary structure, in plastids the minimal PEP RNA polymerase catalytic core is composed of four subunits: alpha, beta, beta', and beta''. When a (nuclear-encoded) sigma factor is associated with the core the holoenzyme is formed, which can initiate transcription. Requires Mg(2+) as cofactor. Zn(2+) serves as cofactor.

The protein resides in the plastid. Its subcellular location is the chloroplast. It catalyses the reaction RNA(n) + a ribonucleoside 5'-triphosphate = RNA(n+1) + diphosphate. DNA-dependent RNA polymerase catalyzes the transcription of DNA into RNA using the four ribonucleoside triphosphates as substrates. This Gnetum parvifolium (Small-leaved jointfir) protein is DNA-directed RNA polymerase subunit beta'.